The chain runs to 343 residues: Aspartate carbamoyltransferase catalytic subunit (343 aa).

Carbamoyl phosphate is bound by residues Arg91 and Thr92. Position 119 (Lys119) interacts with L-aspartate. Carbamoyl phosphate-binding residues include Arg141, His171, and Gln174. 2 residues coordinate L-aspartate: Arg204 and Arg259. Carbamoyl phosphate-binding residues include Gly300 and Pro301.

This sequence belongs to the aspartate/ornithine carbamoyltransferase superfamily. ATCase family. In terms of assembly, heterododecamer (2C3:3R2) of six catalytic PyrB chains organized as two trimers (C3), and six regulatory PyrI chains organized as three dimers (R2).

It catalyses the reaction carbamoyl phosphate + L-aspartate = N-carbamoyl-L-aspartate + phosphate + H(+). Its pathway is pyrimidine metabolism; UMP biosynthesis via de novo pathway; (S)-dihydroorotate from bicarbonate: step 2/3. Its function is as follows. Catalyzes the condensation of carbamoyl phosphate and aspartate to form carbamoyl aspartate and inorganic phosphate, the committed step in the de novo pyrimidine nucleotide biosynthesis pathway. This is Aspartate carbamoyltransferase catalytic subunit from Burkholderia cenocepacia (strain HI2424).